The primary structure comprises 88 residues: Bombyxin B-8 (88 aa).

Residues 1–18 (MKTSVIFVLIVLNLMWSG) form the signal peptide. Intrachain disulfides connect Cys-28/Cys-74, Cys-40/Cys-87, and Cys-73/Cys-78. Positions 47 to 65 (GGAQYAPYFWQKAYLGSRG) are cleaved as a propeptide — c peptide like.

Belongs to the insulin family. In terms of assembly, heterodimer of a B chain and an A chain linked by two disulfide bonds.

Its subcellular location is the secreted. Its function is as follows. Brain peptide responsible for activation of prothoracic glands to produce ecdysone in insects. The protein is Bombyxin B-8 (BBXB8) of Bombyx mori (Silk moth).